Consider the following 308-residue polypeptide: 4-hydroxy-3-methylbut-2-enyl diphosphate reductase (308 aa).

Cys-12 serves as a coordination point for [4Fe-4S] cluster. 2 residues coordinate (2E)-4-hydroxy-3-methylbut-2-enyl diphosphate: His-41 and His-74. Dimethylallyl diphosphate contacts are provided by His-41 and His-74. 2 residues coordinate isopentenyl diphosphate: His-41 and His-74. A [4Fe-4S] cluster-binding site is contributed by Cys-96. Residue His-124 participates in (2E)-4-hydroxy-3-methylbut-2-enyl diphosphate binding. Position 124 (His-124) interacts with dimethylallyl diphosphate. Residue His-124 coordinates isopentenyl diphosphate. The active-site Proton donor is the Glu-126. (2E)-4-hydroxy-3-methylbut-2-enyl diphosphate is bound at residue Thr-166. Cys-196 provides a ligand contact to [4Fe-4S] cluster. The (2E)-4-hydroxy-3-methylbut-2-enyl diphosphate site is built by Ser-224, Ser-225, Asn-226, and Ser-268. 4 residues coordinate dimethylallyl diphosphate: Ser-224, Ser-225, Asn-226, and Ser-268. Isopentenyl diphosphate contacts are provided by Ser-224, Ser-225, Asn-226, and Ser-268.

The protein belongs to the IspH family. [4Fe-4S] cluster is required as a cofactor.

It carries out the reaction isopentenyl diphosphate + 2 oxidized [2Fe-2S]-[ferredoxin] + H2O = (2E)-4-hydroxy-3-methylbut-2-enyl diphosphate + 2 reduced [2Fe-2S]-[ferredoxin] + 2 H(+). It catalyses the reaction dimethylallyl diphosphate + 2 oxidized [2Fe-2S]-[ferredoxin] + H2O = (2E)-4-hydroxy-3-methylbut-2-enyl diphosphate + 2 reduced [2Fe-2S]-[ferredoxin] + 2 H(+). It participates in isoprenoid biosynthesis; dimethylallyl diphosphate biosynthesis; dimethylallyl diphosphate from (2E)-4-hydroxy-3-methylbutenyl diphosphate: step 1/1. The protein operates within isoprenoid biosynthesis; isopentenyl diphosphate biosynthesis via DXP pathway; isopentenyl diphosphate from 1-deoxy-D-xylulose 5-phosphate: step 6/6. In terms of biological role, catalyzes the conversion of 1-hydroxy-2-methyl-2-(E)-butenyl 4-diphosphate (HMBPP) into a mixture of isopentenyl diphosphate (IPP) and dimethylallyl diphosphate (DMAPP). Acts in the terminal step of the DOXP/MEP pathway for isoprenoid precursor biosynthesis. The chain is 4-hydroxy-3-methylbut-2-enyl diphosphate reductase from Vesicomyosocius okutanii subsp. Calyptogena okutanii (strain HA).